The sequence spans 877 residues: Ewing's tumor-associated antigen 1 homolog (877 aa).

Positions 1-82 (MQLKDGGTGM…GRSPRGKETP (82 aa)) are disordered. Residues 56-65 (AGTRSARRAQ) are compositionally biased toward basic residues. Residue K87 forms a Glycyl lysine isopeptide (Lys-Gly) (interchain with G-Cter in SUMO2) linkage. The short motif at 107–113 (IFWDQNS) is the ATR-activation domain (AAD) element. Coiled-coil stretches lie at residues 185–213 (KTKNREKELMKLAQQFDKNMEELDVIQEQ) and 306–335 (AFLNNSKTSLRKKNALLQEEIITTETLLTE). Residues K416 and K444 each participate in a glycyl lysine isopeptide (Lys-Gly) (interchain with G-Cter in SUMO2) cross-link. The interval 450–479 (PSKTRNGELRNAGEHRFSSHPGDESRKVPF) is disordered. Positions 454 to 476 (RNGELRNAGEHRFSSHPGDESRK) are enriched in basic and acidic residues. S467 is subject to Phosphoserine. A Glycyl lysine isopeptide (Lys-Gly) (interchain with G-Cter in SUMO2) cross-link involves residue K510. Residues 607–622 (GEVDDDLFCQACDDIE) carry the RBM1 motif motif. Disordered regions lie at residues 626–664 (QQENKGSEESESVSYTSTRGSRSSSTASKQASQSAPSKH) and 818–877 (ANQQ…ISLP). The segment covering 637–662 (SVSYTSTRGSRSSSTASKQASQSAPS) has biased composition (low complexity). Residues 818-833 (ANQQQSSINYSESLKP) show a composition bias toward polar residues. A compositionally biased stretch (basic and acidic residues) spans 840 to 859 (ERNRKYSPEEIQRKRQEALV). The RBM2 motif signature appears at 843–865 (RKYSPEEIQRKRQEALVRRKAKA). Polar residues predominate over residues 868 to 877 (TVQSAPISLP).

As to quaternary structure, interacts (via RBM1 motif) with RPA1. Interacts (via RBM2 motif) with RPA2. Interacts (via the ATR-activation domain motif) with ATR. In terms of processing, phosphorylated by ATR.

The protein resides in the nucleus. Its function is as follows. Replication stress response protein that accumulates at DNA damage sites and promotes replication fork progression and integrity. Recruited to stalled replication forks via interaction with the RPA complex and directly stimulates ATR kinase activity independently of TOPBP1. Probably only regulates a subset of ATR targets. The chain is Ewing's tumor-associated antigen 1 homolog from Mus musculus (Mouse).